Reading from the N-terminus, the 152-residue chain is Actin-depolymerizing factor 2, isoform c (152 aa).

The 144-residue stretch at 4 to 147 (GVKVDPSCKN…DEKSVKSDLM (144 aa)) folds into the ADF-H domain.

It belongs to the actin-binding proteins ADF family.

Depolymerizes growing actin filaments in muscle cells; required for the assembly of actin filaments into the functional contractile myofilament lattice of muscle. The chain is Actin-depolymerizing factor 2, isoform c from Caenorhabditis elegans.